A 414-amino-acid chain; its full sequence is uncharacterized protein (414 aa).

It belongs to the MG032/MG096/MG288 family.

This is an uncharacterized protein from Mycoplasma genitalium (strain ATCC 33530 / DSM 19775 / NCTC 10195 / G37) (Mycoplasmoides genitalium).